A 388-amino-acid polypeptide reads, in one-letter code: Arginine biosynthesis bifunctional protein ArgJ 2 (388 aa).

5 residues coordinate substrate: T145, K167, T178, E257, and N381. The active-site Nucleophile is T178.

Belongs to the ArgJ family. In terms of assembly, heterotetramer of two alpha and two beta chains.

The protein localises to the cytoplasm. The catalysed reaction is N(2)-acetyl-L-ornithine + L-glutamate = N-acetyl-L-glutamate + L-ornithine. The enzyme catalyses L-glutamate + acetyl-CoA = N-acetyl-L-glutamate + CoA + H(+). Its pathway is amino-acid biosynthesis; L-arginine biosynthesis; L-ornithine and N-acetyl-L-glutamate from L-glutamate and N(2)-acetyl-L-ornithine (cyclic): step 1/1. It functions in the pathway amino-acid biosynthesis; L-arginine biosynthesis; N(2)-acetyl-L-ornithine from L-glutamate: step 1/4. Catalyzes two activities which are involved in the cyclic version of arginine biosynthesis: the synthesis of N-acetylglutamate from glutamate and acetyl-CoA as the acetyl donor, and of ornithine by transacetylation between N(2)-acetylornithine and glutamate. The chain is Arginine biosynthesis bifunctional protein ArgJ 2 from Clostridium acetobutylicum (strain ATCC 824 / DSM 792 / JCM 1419 / IAM 19013 / LMG 5710 / NBRC 13948 / NRRL B-527 / VKM B-1787 / 2291 / W).